A 302-amino-acid polypeptide reads, in one-letter code: Meiotically up-regulated gene 129 protein (302 aa).

Its function is as follows. Has a role in meiosis. The sequence is that of Meiotically up-regulated gene 129 protein (mug129) from Schizosaccharomyces pombe (strain 972 / ATCC 24843) (Fission yeast).